The primary structure comprises 55 residues: Large ribosomal subunit protein bL33 (55 aa).

The segment covering 1-11 (MAKGGREKIKL) has biased composition (basic and acidic residues). Residues 1–26 (MAKGGREKIKLESTAGTGHFYTTDKN) form a disordered region.

It belongs to the bacterial ribosomal protein bL33 family.

This Methylibium petroleiphilum (strain ATCC BAA-1232 / LMG 22953 / PM1) protein is Large ribosomal subunit protein bL33.